The following is a 158-amino-acid chain: Cyclic pyranopterin monophosphate synthase (158 aa).

Substrate-binding positions include 75 to 77 (LCH) and 113 to 114 (ME). D128 is an active-site residue.

Belongs to the MoaC family. In terms of assembly, homohexamer; trimer of dimers.

It catalyses the reaction (8S)-3',8-cyclo-7,8-dihydroguanosine 5'-triphosphate = cyclic pyranopterin phosphate + diphosphate. The protein operates within cofactor biosynthesis; molybdopterin biosynthesis. Catalyzes the conversion of (8S)-3',8-cyclo-7,8-dihydroguanosine 5'-triphosphate to cyclic pyranopterin monophosphate (cPMP). The polypeptide is Cyclic pyranopterin monophosphate synthase (Mannheimia succiniciproducens (strain KCTC 0769BP / MBEL55E)).